A 216-amino-acid polypeptide reads, in one-letter code: Protein U63 (216 aa).

Belongs to the herpesviridae UL92 family.

The protein is Protein U63 (U63) of Homo sapiens (Human).